The primary structure comprises 91 residues: Putative regulatory protein CLB_2388 (91 aa).

The protein belongs to the RemA family.

This Clostridium botulinum (strain ATCC 19397 / Type A) protein is Putative regulatory protein CLB_2388.